We begin with the raw amino-acid sequence, 162 residues long: NAD(P)H-quinone oxidoreductase subunit N (162 aa).

This sequence belongs to the complex I NdhN subunit family. In terms of assembly, NDH-1 can be composed of about 15 different subunits; different subcomplexes with different compositions have been identified which probably have different functions.

The protein localises to the cellular thylakoid membrane. The catalysed reaction is a plastoquinone + NADH + (n+1) H(+)(in) = a plastoquinol + NAD(+) + n H(+)(out). The enzyme catalyses a plastoquinone + NADPH + (n+1) H(+)(in) = a plastoquinol + NADP(+) + n H(+)(out). Its function is as follows. NDH-1 shuttles electrons from an unknown electron donor, via FMN and iron-sulfur (Fe-S) centers, to quinones in the respiratory and/or the photosynthetic chain. The immediate electron acceptor for the enzyme in this species is believed to be plastoquinone. Couples the redox reaction to proton translocation, and thus conserves the redox energy in a proton gradient. Cyanobacterial NDH-1 also plays a role in inorganic carbon-concentration. The sequence is that of NAD(P)H-quinone oxidoreductase subunit N from Nostoc sp. (strain PCC 7120 / SAG 25.82 / UTEX 2576).